The primary structure comprises 150 residues: UPF0260 protein PputGB1_4117 (150 aa).

Belongs to the UPF0260 family.

The chain is UPF0260 protein PputGB1_4117 from Pseudomonas putida (strain GB-1).